The sequence spans 301 residues: tRNA-cytidine(32) 2-sulfurtransferase (301 aa).

Positions 55-60 (SGGKDS) match the PP-loop motif motif. [4Fe-4S] cluster is bound by residues cysteine 130, cysteine 133, and cysteine 221.

The protein belongs to the TtcA family. Homodimer. Mg(2+) serves as cofactor. The cofactor is [4Fe-4S] cluster.

It is found in the cytoplasm. The enzyme catalyses cytidine(32) in tRNA + S-sulfanyl-L-cysteinyl-[cysteine desulfurase] + AH2 + ATP = 2-thiocytidine(32) in tRNA + L-cysteinyl-[cysteine desulfurase] + A + AMP + diphosphate + H(+). It functions in the pathway tRNA modification. Catalyzes the ATP-dependent 2-thiolation of cytidine in position 32 of tRNA, to form 2-thiocytidine (s(2)C32). The sulfur atoms are provided by the cysteine/cysteine desulfurase (IscS) system. The chain is tRNA-cytidine(32) 2-sulfurtransferase from Acinetobacter baumannii (strain SDF).